Consider the following 425-residue polypeptide: Glyco-Gag protein (425 aa).

Residues 1–54 (MSRASSGTATGARLFGISSVLGEYRVLIGDEGAGPSRSPSEVSFSVWYRSRAAR) are Cytoplasmic-facing. A helical transmembrane segment spans residues 55–75 (LVIVCLVASFLVPCLTFLIAE). At 76 to 425 (TVMGQTITTP…VVQGKEETPA (350 aa)) the chain is on the extracellular side. Asparagine 137 is a glycosylation site (N-linked (GlcNAc...) asparagine; by host). A disordered region spans residues 174 to 285 (VRPFLPPPKP…LREGPNNRPQ (112 aa)). The segment covering 177–196 (FLPPPKPPTSLPQPLSPQPS) has biased composition (pro residues). The span at 197–209 (APLTSSLYPVLPK) shows a compositional bias: low complexity. 2 stretches are compositionally biased toward pro residues: residues 213–223 (PKPPVLPPDPS) and 233–248 (EPPP…PSGP).

Glycosylated by host. Post-translationally, cleaved by host near the middle of the molecule, releasing the c-terminal half containing capsid and nucleoprotein domains op GAG.

The protein resides in the host cell membrane. In terms of biological role, plays a role in viral particle release. Presumably acts by facilitating the fission of the virion bud at the cell surface. The polypeptide is Glyco-Gag protein (Felidae (cat family)).